The primary structure comprises 1515 residues: Homeobox protein cut-like 1 (1515 aa).

The stretch at 56–361 forms a coiled coil; that stretch reads LLKSFQGEID…VKKELNTLKS (306 aa). Polar residues predominate over residues 393 to 405; sequence ENATLRISNSDLS. 4 disordered regions span residues 393–453, 509–546, 644–666, and 680–702; these read ENAT…SPAG, PYST…ISEG, PKRR…TGSD, and LQVQ…NSDD. Residues 422-432 show a composition bias toward pro residues; it reads GPLPASPPPQL. Ser-427 bears the Phosphoserine mark. The segment covering 436–447 has biased composition (polar residues); sequence TGEQVSNTNGTH. Residues 514 to 544 show a composition bias toward low complexity; that stretch reads SISSPSPLQQSPDVNGMAPSPSQSESAGSIS. The segment at residues 540–627 is a DNA-binding region (CUT 1); that stretch reads AGSISEGEEI…ILALRSIQGR (88 aa). Ser-761 carries the phosphoserine modification. 2 disordered regions span residues 769–871 and 884–923; these read PETS…SASA and YSQS…PSVP. Residues Lys-783, Lys-809, and Lys-840 each participate in a glycyl lysine isopeptide (Lys-Gly) (interchain with G-Cter in SUMO2) cross-link. Residues 828 to 852 are compositionally biased toward basic and acidic residues; that stretch reads PERRNLTSSEETKADETTASGKERA. Polar residues-rich tracts occupy residues 853–868 and 884–906; these read GSSQ…QGPS and YSQS…NSPL. Ser-904 carries the post-translational modification Phosphoserine. The segment at residues 929-1016 is a DNA-binding region (CUT 2); the sequence is QYEVYMYQEV…QGVLPVQGQQ (88 aa). Residues 1032–1044 show a composition bias toward polar residues; the sequence is QQGCVSSESTPKT. Residues 1032-1105 form a disordered region; sequence QQGCVSSEST…QPTTPLPLSG (74 aa). Residues 1045-1061 show a composition bias toward low complexity; the sequence is SASCSPAPESPMSSSES. Phosphoserine occurs at positions 1054 and 1064. Positions 1112 to 1199 form a DNA-binding region, CUT 3; the sequence is QELVAMSPEL…VEKLMDMKRM (88 aa). The tract at residues 1207–1242 is disordered; the sequence is RRHSSVSDSQPCEPPSVGIDYSQGASPQPQHQLKKP. Positions 1239–1298 form a DNA-binding region, homeobox; the sequence is LKKPRVVLAPEEKEALKRAYQQKPYPSPKTIEELATQLNLKTSTVINWFHNYRSRIRREL. A Phosphoserine modification is found at Ser-1265. Lys-1279 is covalently cross-linked (Glycyl lysine isopeptide (Lys-Gly) (interchain with G-Cter in SUMO2)). The tract at residues 1307–1488 is disordered; that stretch reads SQGQAGASDS…AGARDNPVRK (182 aa). The segment covering 1313 to 1328 has biased composition (low complexity); it reads ASDSPSARSSRAAPSS. The segment covering 1331–1343 has biased composition (acidic residues); it reads DSCDGVEATDAEE. Ser-1332 carries the phosphoserine modification. The span at 1365–1378 shows a compositional bias: basic and acidic residues; that stretch reads ADREEATQPAEKAK. Low complexity predominate over residues 1406 to 1468; it reads ADAPAPVPSL…ANAPARRPSS (63 aa). A phosphoserine mark is found at Ser-1468, Ser-1496, and Ser-1506.

Belongs to the CUT homeobox family. Interacts with BANP. Interacts with SATB1 (via DNA-binding domains); the interaction inhibits the attachment of both proteins to DNA. In terms of processing, phosphorylated by PKA. As cells progress into S phase, a fraction of CUX1 molecules is proteolytically processed into N-terminally truncated proteins of 110 kDa by CTSL. Cell cycle-dependent processing of CUX1 serves to generate a CDP/Cux p110 with distinct DNA binding and transcriptional properties. Testis-specific where it is expressed in germ cells.

The protein localises to the nucleus. Functionally, transcription factor involved in the control of neuronal differentiation in the brain. Regulates dendrite development and branching, and dendritic spine formation in cortical layers II-III. Also involved in the control of synaptogenesis. In addition, it has probably a broad role in mammalian development as a repressor of developmentally regulated gene expression. May act by preventing binding of positively-activing CCAAT factors to promoters. Component of nf-munr repressor; binds to the matrix attachment regions (MARs) (5' and 3') of the immunoglobulin heavy chain enhancer. Represses T-cell receptor (TCR) beta enhancer function by binding to MARbeta, an ATC-rich DNA sequence located upstream of the TCR beta enhancer. Binds to the TH enhancer; may require the basic helix-loop-helix protein TCF4 as a coactivator. Its function is as follows. Plays a role in cell cycle progression, in particular at the G1/S transition. As cells progress into S phase, a fraction of CUX1 molecules is proteolytically processed into N-terminally truncated proteins of 110 kDa. While CUX1 only transiently binds to DNA and carries the CCAAT-displacement activity, CDP/Cux p110 makes a stable interaction with DNA and stimulates expression of genes such as POLA1. This chain is Homeobox protein cut-like 1, found in Mus musculus (Mouse).